The chain runs to 334 residues: tRNA N6-adenosine threonylcarbamoyltransferase (334 aa).

Histidine 112 and histidine 116 together coordinate Fe cation. Substrate-binding positions include 135 to 139 (VVSGG), aspartate 168, glycine 181, aspartate 185, and asparagine 274. Aspartate 303 serves as a coordination point for Fe cation.

It belongs to the KAE1 / TsaD family. Requires Fe(2+) as cofactor.

The protein localises to the cytoplasm. The catalysed reaction is L-threonylcarbamoyladenylate + adenosine(37) in tRNA = N(6)-L-threonylcarbamoyladenosine(37) in tRNA + AMP + H(+). In terms of biological role, required for the formation of a threonylcarbamoyl group on adenosine at position 37 (t(6)A37) in tRNAs that read codons beginning with adenine. Is involved in the transfer of the threonylcarbamoyl moiety of threonylcarbamoyl-AMP (TC-AMP) to the N6 group of A37, together with TsaE and TsaB. TsaD likely plays a direct catalytic role in this reaction. The protein is tRNA N6-adenosine threonylcarbamoyltransferase of Anaeromyxobacter dehalogenans (strain 2CP-C).